A 413-amino-acid polypeptide reads, in one-letter code: Multifunctional CCA protein (413 aa).

ATP is bound by residues Gly-8 and Arg-11. The CTP site is built by Gly-8 and Arg-11. Positions 21 and 23 each coordinate Mg(2+). ATP contacts are provided by Arg-91, Arg-137, and Arg-140. Arg-91, Arg-137, and Arg-140 together coordinate CTP. The HD domain maps to 228–329; sequence TGIHTLMVLE…VKLFDKADLW (102 aa).

This sequence belongs to the tRNA nucleotidyltransferase/poly(A) polymerase family. Bacterial CCA-adding enzyme type 1 subfamily. In terms of assembly, monomer. Can also form homodimers and oligomers. It depends on Mg(2+) as a cofactor. Ni(2+) serves as cofactor.

It catalyses the reaction a tRNA precursor + 2 CTP + ATP = a tRNA with a 3' CCA end + 3 diphosphate. It carries out the reaction a tRNA with a 3' CCA end + 2 CTP + ATP = a tRNA with a 3' CCACCA end + 3 diphosphate. Catalyzes the addition and repair of the essential 3'-terminal CCA sequence in tRNAs without using a nucleic acid template. Adds these three nucleotides in the order of C, C, and A to the tRNA nucleotide-73, using CTP and ATP as substrates and producing inorganic pyrophosphate. tRNA 3'-terminal CCA addition is required both for tRNA processing and repair. Also involved in tRNA surveillance by mediating tandem CCA addition to generate a CCACCA at the 3' terminus of unstable tRNAs. While stable tRNAs receive only 3'-terminal CCA, unstable tRNAs are marked with CCACCA and rapidly degraded. In Shewanella loihica (strain ATCC BAA-1088 / PV-4), this protein is Multifunctional CCA protein.